A 697-amino-acid chain; its full sequence is Alpha-1,4-glucan:maltose-1-phosphate maltosyltransferase (697 aa).

Lys284 contacts alpha-maltose 1-phosphate. Positions 286–305 (RNNSVTAAPGDVGSPWAIGS) are disordered. Alpha-maltose 1-phosphate contacts are provided by Gln344 and Asp379. The active-site Nucleophile is the Asp414. Asn415 contributes to the alpha-maltose 1-phosphate binding site. Residue Glu443 is the Proton donor of the active site. Residue 553 to 554 (KY) participates in alpha-maltose 1-phosphate binding.

Belongs to the glycosyl hydrolase 13 family. GlgE subfamily. As to quaternary structure, homodimer.

The catalysed reaction is alpha-maltose 1-phosphate + [(1-&gt;4)-alpha-D-glucosyl](n) = [(1-&gt;4)-alpha-D-glucosyl](n+2) + phosphate. It participates in glycan biosynthesis; glycogen biosynthesis. The transfer reaction from maltose-1-P to glycogen is inhibited by micromolar amounts of inorganic phosphate or arsenate but is only slightly inhibited by millimolar concentrations of glucose-1-P, glucose-6-P, or inorganic pyrophosphate. Is also inhibited by ATP, by 1,4-dideoxy-1,4-imino-D-arabinitol (DIA), but not by isofagomine. Functionally, maltosyltransferase that uses maltose 1-phosphate (M1P) as the sugar donor to elongate linear or branched alpha-(1-&gt;4)-glucans. Is also able to catalyze the reverse reaction in vitro. Cannot use glucose 1-phosphate as substrate. Is involved in a branched alpha-glucan biosynthetic pathway from trehalose, together with TreS, Mak and GlgB. This chain is Alpha-1,4-glucan:maltose-1-phosphate maltosyltransferase (glgE), found in Mycolicibacterium smegmatis (strain ATCC 700084 / mc(2)155) (Mycobacterium smegmatis).